A 457-amino-acid chain; its full sequence is Acetylcholine receptor subunit alpha (457 aa).

Positions 1 to 20 (MELTAVLLLLGLCSAGTVLG) are cleaved as a signal peptide. The Extracellular portion of the chain corresponds to 21-230 (SEHETRLVAK…ITYHFVMQRL (210 aa)). Disulfide bonds link C148–C162 and C212–C213. The N-linked (GlcNAc...) asparagine glycan is linked to N161. 3 helical membrane-spanning segments follow: residues 231 to 255 (PLYF…VFYL), 263 to 281 (MTLS…LVIV), and 297 to 316 (YMLF…VIVI). Topologically, residues 317-428 (NTHHRSPSTH…WKYVAMVMDH (112 aa)) are cytoplasmic. A helical transmembrane segment spans residues 429–447 (ILLGVFMLVCLIGTLAVFA).

It belongs to the ligand-gated ion channel (TC 1.A.9) family. Acetylcholine receptor (TC 1.A.9.1) subfamily. Alpha-1/CHRNA1 sub-subfamily. One of the alpha chains that assemble within the acetylcholine receptor, a pentamer of two alpha chains, a beta, a delta, and a gamma (in immature muscle) or epsilon (in mature muscle) chains. The muscle heteropentamer composed of alpha-1, beta-1, delta, epsilon subunits interacts with the alpha-conotoxin ImII.

It localises to the postsynaptic cell membrane. It is found in the cell membrane. It carries out the reaction K(+)(in) = K(+)(out). It catalyses the reaction Na(+)(in) = Na(+)(out). Its function is as follows. Upon acetylcholine binding, the AChR responds by an extensive change in conformation that affects all subunits and leads to opening of an ion-conducting channel across the plasma membrane. This is Acetylcholine receptor subunit alpha (Chrna1) from Rattus norvegicus (Rat).